The sequence spans 226 residues: NAD(P)H-quinone oxidoreductase subunit K, chloroplastic (226 aa).

[4Fe-4S] cluster contacts are provided by C43, C44, C108, and C139.

The protein belongs to the complex I 20 kDa subunit family. As to quaternary structure, NDH is composed of at least 16 different subunits, 5 of which are encoded in the nucleus. It depends on [4Fe-4S] cluster as a cofactor.

It localises to the plastid. The protein resides in the chloroplast thylakoid membrane. The catalysed reaction is a plastoquinone + NADH + (n+1) H(+)(in) = a plastoquinol + NAD(+) + n H(+)(out). The enzyme catalyses a plastoquinone + NADPH + (n+1) H(+)(in) = a plastoquinol + NADP(+) + n H(+)(out). In terms of biological role, NDH shuttles electrons from NAD(P)H:plastoquinone, via FMN and iron-sulfur (Fe-S) centers, to quinones in the photosynthetic chain and possibly in a chloroplast respiratory chain. The immediate electron acceptor for the enzyme in this species is believed to be plastoquinone. Couples the redox reaction to proton translocation, and thus conserves the redox energy in a proton gradient. The chain is NAD(P)H-quinone oxidoreductase subunit K, chloroplastic from Lupinus luteus (European yellow lupine).